We begin with the raw amino-acid sequence, 496 residues long: Probable cytosol aminopeptidase (496 aa).

Residues K261 and D266 each coordinate Mn(2+). The active site involves K273. Mn(2+) is bound by residues D284, D343, and E345. R347 is an active-site residue.

This sequence belongs to the peptidase M17 family. Requires Mn(2+) as cofactor.

The protein localises to the cytoplasm. The catalysed reaction is Release of an N-terminal amino acid, Xaa-|-Yaa-, in which Xaa is preferably Leu, but may be other amino acids including Pro although not Arg or Lys, and Yaa may be Pro. Amino acid amides and methyl esters are also readily hydrolyzed, but rates on arylamides are exceedingly low.. The enzyme catalyses Release of an N-terminal amino acid, preferentially leucine, but not glutamic or aspartic acids.. Its function is as follows. Presumably involved in the processing and regular turnover of intracellular proteins. Catalyzes the removal of unsubstituted N-terminal amino acids from various peptides. This is Probable cytosol aminopeptidase from Bacillus pumilus (strain SAFR-032).